We begin with the raw amino-acid sequence, 66 residues long: Large ribosomal subunit protein bL35 (66 aa).

It belongs to the bacterial ribosomal protein bL35 family.

The sequence is that of Large ribosomal subunit protein bL35 from Neorickettsia sennetsu (strain ATCC VR-367 / Miyayama) (Ehrlichia sennetsu).